We begin with the raw amino-acid sequence, 136 residues long: MAKAIPKKGSRGRISSRKSIRKIPKGVIHIQASFNNTIVTVTDVRGRVVSWSSAGTCGFQGTRRGTPFAAQTAAANAIRAVVDQGMQRAEVMIKGPGLGRDAALRAIRRSGILLTFVRDVTPMPHNGCRPPKKRRV.

It belongs to the universal ribosomal protein uS11 family. Part of the 30S ribosomal subunit.

It is found in the plastid. The protein resides in the chloroplast. This is Small ribosomal subunit protein uS11c from Helianthus annuus (Common sunflower).